A 258-amino-acid chain; its full sequence is Proteasome subunit beta type-1 (258 aa).

Belongs to the peptidase T1B family. The 26S proteasome consists of a 20S proteasome core and two 19S regulatory subunits. The 20S proteasome core is composed of 28 subunits that are arranged in four stacked rings, resulting in a barrel-shaped structure. The two end rings are each formed by seven alpha subunits, and the two central rings are each formed by seven beta subunits. The catalytic chamber with the active sites is on the inside of the barrel.

It localises to the cytoplasm. The protein resides in the nucleus. Its function is as follows. Non-catalytic component of the proteasome, a multicatalytic proteinase complex which is characterized by its ability to cleave peptides with Arg, Phe, Tyr, Leu, and Glu adjacent to the leaving group at neutral or slightly basic pH. The proteasome has an ATP-dependent proteolytic activity. This is Proteasome subunit beta type-1 (pbs-6) from Caenorhabditis elegans.